We begin with the raw amino-acid sequence, 94 residues long: Co-chaperonin GroES (94 aa).

The protein belongs to the GroES chaperonin family. Heptamer of 7 subunits arranged in a ring. Interacts with the chaperonin GroEL.

The protein resides in the cytoplasm. Its function is as follows. Together with the chaperonin GroEL, plays an essential role in assisting protein folding. The GroEL-GroES system forms a nano-cage that allows encapsulation of the non-native substrate proteins and provides a physical environment optimized to promote and accelerate protein folding. GroES binds to the apical surface of the GroEL ring, thereby capping the opening of the GroEL channel. In Listeria monocytogenes serotype 4b (strain CLIP80459), this protein is Co-chaperonin GroES.